Consider the following 217-residue polypeptide: Pro-Pro endopeptidase (217 aa).

Residues 1–27 form the signal peptide; it reads MKWDKRVVALILAVMIVCPLFAAPAHA. In terms of domain architecture, ATLF-like spans 30 to 216; that stretch reads QSILDKLVVL…TYEFMAKLFA (187 aa). The tract at residues 112 to 115 is plays a crucial role in substrate specificity; that stretch reads SERV. His-137 provides a ligand contact to Zn(2+). Glu-138 (proton acceptor) is an active-site residue. Residues His-141, Tyr-174, and Glu-181 each coordinate Zn(2+).

Belongs to the peptidase M34 family. Pro-Pro endopeptidase subfamily. Monomer. Zn(2+) is required as a cofactor.

Its subcellular location is the secreted. The catalysed reaction is The enzyme catalyzes the hydrolytic cleavage of peptide bonds between two proline residues.. Its function is as follows. Zinc-dependent endoprotease with a unique preference for proline residues surrounding the scissile bond, which cleaves in a PLP-|-PVP motif. Cleaves the cell surface protein encoded by an adjacent gene, which contains two PPEP-2 cleaving sites and putative extracellular matrix-binding domains. Thereby, may have a role in the regulation of P.alvei adhesion. Is not able to cleave within the PVP-|-PVQ motif, and only shows a very poor cleavage of the VNP-|-PVP motif in vitro, which is the optimal substrate peptide for PPEP-1 from P.difficile. The protein is Pro-Pro endopeptidase of Paenibacillus alvei (strain ATCC 6344 / DSM 29 / NBRC 3343 / NCIMB 9371 / NCTC 6352) (Bacillus alvei).